The primary structure comprises 157 residues: DNA gyrase inhibitor (157 aa).

Belongs to the DNA gyrase inhibitor family. In terms of assembly, interacts with DNA gyrase.

It is found in the cytoplasm. In terms of biological role, inhibits the supercoiling activity of DNA gyrase. Acts by inhibiting DNA gyrase at an early step, prior to (or at the step of) binding of DNA by the gyrase. It protects cells against toxins that target DNA gyrase, by inhibiting activity of these toxins and reducing the formation of lethal double-strand breaks in the cell. In Cronobacter sakazakii (strain ATCC BAA-894) (Enterobacter sakazakii), this protein is DNA gyrase inhibitor.